A 135-amino-acid polypeptide reads, in one-letter code: Large ribosomal subunit protein uL18 (135 aa).

The tract at residues 1–23 (MSQTANQKAKRIPLGKDASTKRR) is disordered.

The protein belongs to the universal ribosomal protein uL18 family. As to quaternary structure, part of the 50S ribosomal subunit; part of the 5S rRNA/L5/L18/L25 subcomplex. Contacts the 5S and 23S rRNAs.

Functionally, this is one of the proteins that bind and probably mediate the attachment of the 5S RNA into the large ribosomal subunit, where it forms part of the central protuberance. The polypeptide is Large ribosomal subunit protein uL18 (Rhodococcus jostii (strain RHA1)).